The primary structure comprises 167 residues: MKLITQLLVLFGFVLPNGYEEDKAKLVNIYRELLKVEETLKKGQINSKVIDKLNALGYPIYQIYSKYKYTKERSEIDLKLYAYSKKLYKHYFFVKRSIFPKFVMMDAKRNKLPVCNVEVKGKEKKHLIVRIQHPENDEEIREVYEGTQLFFADRLGFESIDFRRCKE.

This is an uncharacterized protein from Aquifex aeolicus (strain VF5).